The sequence spans 288 residues: Signal recognition particle receptor FtsY (288 aa).

Residues 93-100 (GINGTGKT), 175-179 (DTAGR), and 233-236 (TKLD) each bind GTP.

It belongs to the GTP-binding SRP family. FtsY subfamily. As to quaternary structure, part of the signal recognition particle protein translocation system, which is composed of SRP and FtsY.

The protein resides in the cell membrane. It is found in the cytoplasm. The catalysed reaction is GTP + H2O = GDP + phosphate + H(+). Functionally, involved in targeting and insertion of nascent membrane proteins into the cytoplasmic membrane. Acts as a receptor for the complex formed by the signal recognition particle (SRP) and the ribosome-nascent chain (RNC). In Thermoplasma acidophilum (strain ATCC 25905 / DSM 1728 / JCM 9062 / NBRC 15155 / AMRC-C165), this protein is Signal recognition particle receptor FtsY.